The following is a 156-amino-acid chain: Small ribosomal subunit protein uS7 (156 aa).

The protein belongs to the universal ribosomal protein uS7 family. As to quaternary structure, part of the 30S ribosomal subunit. Contacts proteins S9 and S11.

Its function is as follows. One of the primary rRNA binding proteins, it binds directly to 16S rRNA where it nucleates assembly of the head domain of the 30S subunit. Is located at the subunit interface close to the decoding center, probably blocks exit of the E-site tRNA. The polypeptide is Small ribosomal subunit protein uS7 (Actinobacillus succinogenes (strain ATCC 55618 / DSM 22257 / CCUG 43843 / 130Z)).